Here is an 810-residue protein sequence, read N- to C-terminus: DNA-binding protein REB1 (810 aa).

Basic and acidic residues-rich tracts occupy residues 1-10 (MPSGHNDKNA) and 29-44 (HQNH…LENK). Disordered regions lie at residues 1-80 (MPSG…ENIS), 114-161 (NQQD…GVDD), 180-243 (NNNN…TNND), 294-313 (HGLN…LSNS), and 346-365 (QDTQ…AGSV). Composition is skewed to low complexity over residues 51 to 64 (IVES…NNND) and 124 to 135 (NNNTDNGNDSNN). A compositionally biased stretch (basic and acidic residues) spans 149-161 (DKNKKDAGVGVDD). Over residues 180–191 (NNNNNNSIANDS) the composition is skewed to low complexity. Over residues 198-208 (HDNGNNHENSQ) the composition is skewed to basic and acidic residues. The span at 346–355 (QDTQPHQQKS) shows a compositional bias: polar residues. Serine 355 bears the Phosphoserine mark. Positions 470-523 (HIFEQRGKWTAEEEQELAKLCAEKEGQWAEIGKTLGRMPEDCRDRWRNYVKCGT) constitute an HTH myb-type domain. A DNA-binding region (H-T-H motif) is located at residues 497–519 (WAEIGKTLGRMPEDCRDRWRNYV). A disordered region spans residues 572–667 (QNDHRNNDED…STHSKSLSNT (96 aa)). Residues 586-606 (ASAAAAAAAAIQEQQQLLQQK) show a composition bias toward low complexity. The segment covering 627-636 (DNKDEDKPHD) has biased composition (basic and acidic residues). Positions 643–667 (DDNSQNSMVPAPSATSTHSKSLSNT) are enriched in polar residues. In terms of domain architecture, Myb-like spans 692–717 (NWTIVSERMGGTRSRIQCRYKWNKLV). Residue lysine 807 forms a Glycyl lysine isopeptide (Lys-Gly) (interchain with G-Cter in SUMO) linkage.

The protein localises to the nucleus. Functionally, DNA-binding protein that recognizes sites within both the enhancer and the promoter of rRNA transcription, as well as upstream of many genes transcribed by RNA polymerase II. It is essential for cell growth. May stimulate or inhibit transcription. Specifically recognizes the sequence 5'-CCGGGTA-3' or 5'-CGGGTRR-3' (where R is any purine). A member of the general regulatory factors (GRFs) which act as genome partitioners. Acts as a chromatin insulator which are known as STARs (Subtelomeric anti-silencing region). STARs prevent negative or positive transcription influence by extending across chromatin to a promoter. The polypeptide is DNA-binding protein REB1 (REB1) (Saccharomyces cerevisiae (strain ATCC 204508 / S288c) (Baker's yeast)).